We begin with the raw amino-acid sequence, 865 residues long: Prominin-1 (865 aa).

Positions 1–19 (MALVLGSLLLLGLCGNSFS) are cleaved as a signal peptide. The Extracellular portion of the chain corresponds to 20 to 108 (GGQPSSTDAP…GLKIVYYEAG (89 aa)). Residues 109-129 (IILCCVLGLLFIILMPLVGYF) traverse the membrane as a helical segment. The Cytoplasmic portion of the chain corresponds to 130 to 157 (FCMCRCCNKCGGEMHQRQKENGPFLRKC). The helical transmembrane segment at 158-178 (FAISLLVICIIISIGIFYGFV) threads the bilayer. The Extracellular segment spans residues 179–433 (ANHQVRTRIK…LPTLEEYDSY (255 aa)). Residue Asn220 is glycosylated (N-linked (GlcNAc...) asparagine). An N6-acetyllysine mark is found at Lys225, Lys257, and Lys264. Asn274, Asn395, and Asn414 each carry an N-linked (GlcNAc...) asparagine glycan. Residues 434 to 454 (WWLGGLVICSLLTLIVIFYYL) form a helical membrane-spanning segment. The Cytoplasmic segment spans residues 455-486 (GLLCGVCGYDRHATPTTRGCVSNTGGVFLMVG). Residues 487-507 (VGLSFLFCWILMIIVVLTFVF) traverse the membrane as a helical segment. Residues 508-792 (GANVEKLICE…LCSYIIDPLN (285 aa)) lie on the Extracellular side of the membrane. Residues Asn548, Asn580, Asn729, and Asn730 are each glycosylated (N-linked (GlcNAc...) asparagine). A helical transmembrane segment spans residues 793–813 (LFWFGIGKATVFLLPALIFAV). Residues 814 to 865 (KLAKYYRRMDSEDVYDDVETIPMKNMENGNNGYHKDHVYGIHNPVMTSPSQH) lie on the Cytoplasmic side of the membrane. At Ser863 the chain carries Phosphoserine.

It belongs to the prominin family. Interacts with CDHR1 and with actin filaments. Interacts with NAT8 and NAT8B. Post-translationally, isoform 1 and isoform 2 are glycosylated. Acetylation at Lys-225, Lys-257 and Lys-264 by NAT8 and NAT8B may control PROM1 protein expression and its function in cell apoptosis. Isoform 1 is selectively expressed on CD34 hematopoietic stem and progenitor cells in adult and fetal bone marrow, fetal liver, cord blood and adult peripheral blood. Isoform 1 is not detected on other blood cells. Isoform 1 is also expressed in a number of non-lymphoid tissues including retina, pancreas, placenta, kidney, liver, lung, brain and heart. Found in saliva within small membrane particles. Isoform 2 is predominantly expressed in fetal liver, skeletal muscle, kidney, and heart as well as adult pancreas, kidney, liver, lung, and placenta. Isoform 2 is highly expressed in fetal liver, low in bone marrow, and barely detectable in peripheral blood. Isoform 2 is expressed on hematopoietic stem cells and in epidermal basal cells (at protein level). Expressed in adult retina by rod and cone photoreceptor cells (at protein level).

It is found in the apical cell membrane. Its subcellular location is the cell projection. The protein localises to the microvillus membrane. It localises to the cilium. The protein resides in the photoreceptor outer segment. It is found in the endoplasmic reticulum. Its subcellular location is the endoplasmic reticulum-Golgi intermediate compartment. Functionally, may play a role in cell differentiation, proliferation and apoptosis. Binds cholesterol in cholesterol-containing plasma membrane microdomains and may play a role in the organization of the apical plasma membrane in epithelial cells. During early retinal development acts as a key regulator of disk morphogenesis. Involved in regulation of MAPK and Akt signaling pathways. In neuroblastoma cells suppresses cell differentiation such as neurite outgrowth in a RET-dependent manner. The chain is Prominin-1 (PROM1) from Homo sapiens (Human).